Here is a 189-residue protein sequence, read N- to C-terminus: B3 domain-containing protein At2g32645 (189 aa).

The segment at residues 33–133 (FNQVKTPDFL…KLCFALTPKI (101 aa)) is a DNA-binding region (TF-B3).

Its subcellular location is the nucleus. This Arabidopsis thaliana (Mouse-ear cress) protein is B3 domain-containing protein At2g32645.